The sequence spans 247 residues: Sugar fermentation stimulation protein homolog (247 aa).

It belongs to the SfsA family.

In Methylorubrum populi (strain ATCC BAA-705 / NCIMB 13946 / BJ001) (Methylobacterium populi), this protein is Sugar fermentation stimulation protein homolog.